The following is a 497-amino-acid chain: 3-octaprenyl-4-hydroxybenzoate carboxy-lyase (497 aa).

N175 is a binding site for Mn(2+). Prenylated FMN-binding positions include 178 to 180 (IYR), 192 to 194 (RWL), and 197 to 198 (RG). Residue E241 coordinates Mn(2+). D290 serves as the catalytic Proton donor.

It belongs to the UbiD family. In terms of assembly, homohexamer. Prenylated FMN serves as cofactor. Requires Mn(2+) as cofactor.

It is found in the cell membrane. It catalyses the reaction a 4-hydroxy-3-(all-trans-polyprenyl)benzoate + H(+) = a 2-(all-trans-polyprenyl)phenol + CO2. The protein operates within cofactor biosynthesis; ubiquinone biosynthesis. Its function is as follows. Catalyzes the decarboxylation of 3-octaprenyl-4-hydroxy benzoate to 2-octaprenylphenol, an intermediate step in ubiquinone biosynthesis. This Escherichia coli O157:H7 protein is 3-octaprenyl-4-hydroxybenzoate carboxy-lyase.